A 420-amino-acid chain; its full sequence is Tubulin epsilon and delta complex protein 1 (420 aa).

A coiled-coil region spans residues 276-340; sequence SEGGLGELES…AVQQELAALQ (65 aa). A compositionally biased stretch (polar residues) spans 342–351; sequence SWEQSSTPGQ. A disordered region spans residues 342–369; that stretch reads SWEQSSTPGQPQRPHRLVRSKDGAPRPQ. Residues 377-409 are a coiled coil; that stretch reads IRTLSAKEACLKKALHQLQRQCQQELARLAGAL.

Interacts with TEDC2. Found in a complex with TEDC1, TEDC2, TUBE1 and TUBD1.

The protein resides in the cell projection. It is found in the cilium. Its subcellular location is the cytoplasm. The protein localises to the cytoskeleton. It localises to the microtubule organizing center. The protein resides in the centrosome. It is found in the centriole. Its function is as follows. Acts as a positive regulator of ciliary hedgehog signaling. Required for centriole stability. May play a role in counteracting perturbation of actin filaments, such as after treatment with the actin depolymerizing microbial metabolite Chivosazole F. The sequence is that of Tubulin epsilon and delta complex protein 1 from Mus musculus (Mouse).